The chain runs to 96 residues: Protein transport protein Sec61 subunit beta (96 aa).

Residues 1–17 (MPGPTPSGTNVGSSGRS) are compositionally biased toward polar residues. Residues 1–54 (MPGPTPSGTNVGSSGRSPSKAVAARAAGSTVRQRKNASCGTRSAGRTTSAGTGG) are disordered. Proline 2 is modified (N-acetylproline). Residues 2–70 (PGPTPSGTNV…EDSPGLKVGP (69 aa)) are Cytoplasmic-facing. The residue at position 7 (serine 7) is a Phosphoserine. Phosphothreonine is present on threonine 9. 3 positions are modified to phosphoserine: serine 13, serine 14, and serine 17. Residue cysteine 39 is the site of S-palmitoyl cysteine attachment. Residues 40-50 (GTRSAGRTTSA) are compositionally biased toward low complexity. The chain crosses the membrane as a helical span at residues 71–91 (VPVLVMSLLFIAAVFMLHIWG).

Belongs to the SEC61-beta family. In terms of assembly, the SEC61 channel-forming translocon complex consists of channel-forming core components SEC61A1, SEC61B and SEC61G and different auxiliary components such as SEC62 and SEC63. The SEC61 channel associates with the multi-pass translocon (MPT) complex. Interacts with TRAM1.

The protein resides in the endoplasmic reticulum membrane. In terms of biological role, component of SEC61 channel-forming translocon complex that mediates transport of signal peptide-containing precursor polypeptides across the endoplasmic reticulum (ER). Forms a ribosome receptor and a gated pore in the ER membrane, both functions required for cotranslational translocation of nascent polypeptides. The SEC61 channel is also involved in ER membrane insertion of transmembrane proteins: it mediates membrane insertion of the first few transmembrane segments of proteins, while insertion of subsequent transmembrane regions of multi-pass membrane proteins is mediated by the multi-pass translocon (MPT) complex. The SEC61 channel cooperates with the translocating protein TRAM1 to import nascent proteins into the ER. Required for PKD1/Polycystin-1 biogenesis. This Mus musculus (Mouse) protein is Protein transport protein Sec61 subunit beta.